The following is a 216-amino-acid chain: Octanoyltransferase (216 aa).

The BPL/LPL catalytic domain maps to 32 to 207 (SDSQDELWIV…TFSQIMGYQQ (176 aa)). Substrate is bound by residues 71-78 (RGGQVTYH), 138-140 (SLG), and 151-153 (GLA). Catalysis depends on Cys169, which acts as the Acyl-thioester intermediate.

Belongs to the LipB family.

It is found in the cytoplasm. It carries out the reaction octanoyl-[ACP] + L-lysyl-[protein] = N(6)-octanoyl-L-lysyl-[protein] + holo-[ACP] + H(+). It functions in the pathway protein modification; protein lipoylation via endogenous pathway; protein N(6)-(lipoyl)lysine from octanoyl-[acyl-carrier-protein]: step 1/2. Catalyzes the transfer of endogenously produced octanoic acid from octanoyl-acyl-carrier-protein onto the lipoyl domains of lipoate-dependent enzymes. Lipoyl-ACP can also act as a substrate although octanoyl-ACP is likely to be the physiological substrate. The polypeptide is Octanoyltransferase (Shewanella frigidimarina (strain NCIMB 400)).